The sequence spans 344 residues: Protein RecA (344 aa).

65–72 (GPESSGKT) contributes to the ATP binding site. Residues 323–337 (ELREKFQPAEAPREA) show a composition bias toward basic and acidic residues. The disordered stretch occupies residues 323–344 (ELREKFQPAEAPREAGDDEDKE).

The protein belongs to the RecA family.

It is found in the cytoplasm. In terms of biological role, can catalyze the hydrolysis of ATP in the presence of single-stranded DNA, the ATP-dependent uptake of single-stranded DNA by duplex DNA, and the ATP-dependent hybridization of homologous single-stranded DNAs. It interacts with LexA causing its activation and leading to its autocatalytic cleavage. The sequence is that of Protein RecA from Xanthomonas axonopodis pv. citri (strain 306).